The primary structure comprises 648 residues: Macrolide export ATP-binding/permease protein MacB (648 aa).

The region spanning 5–243 (LELCNVSRSY…QGVDAAVVNT (239 aa)) is the ABC transporter domain. Position 41 to 48 (41 to 48 (GVSGSGKS)) interacts with ATP. The next 5 membrane-spanning stretches (helical) occupy residues 273 to 293 (LLTM…VVVG), 417 to 437 (ANVV…IGVA), 523 to 543 (LFLT…VMNI), 578 to 598 (LVCL…AFML), and 611 to 631 (LTAL…FGWL).

Belongs to the ABC transporter superfamily. Macrolide exporter (TC 3.A.1.122) family. In terms of assembly, homodimer. Part of the tripartite efflux system MacAB-TolC, which is composed of an inner membrane transporter, MacB, a periplasmic membrane fusion protein, MacA, and an outer membrane component, TolC. The complex forms a large protein conduit and can translocate molecules across both the inner and outer membranes. Interacts with MacA.

Its subcellular location is the cell inner membrane. In terms of biological role, part of the tripartite efflux system MacAB-TolC. MacB is a non-canonical ABC transporter that contains transmembrane domains (TMD), which form a pore in the inner membrane, and an ATP-binding domain (NBD), which is responsible for energy generation. Confers resistance against macrolides. This Salmonella paratyphi A (strain ATCC 9150 / SARB42) protein is Macrolide export ATP-binding/permease protein MacB.